The chain runs to 342 residues: DNA primase (342 aa).

The Zn(2+) site is built by Cys-37, Cys-40, Cys-65, and Cys-68.

The protein belongs to the Tequatrovirus DNA primase family. In terms of assembly, monomer. Hexamer. Interacts with the DnaB-like replicative helicase; this interaction forms the active primosome complex, which is composed of 6 helicase and 1 primase subunits and expresses full helicase and primase activities. Interacts (via C-terminus) with the single-stranded DNA-binding protein. Part of the replicase complex that includes the DNA polymerase, the polymerase clamp, the clamp loader complex, the single-stranded DNA binding protein, the primase, the DnaB-like replicative helicase and the helicase assembly factor.

Its function is as follows. Synthesizes short RNA primers for the lagging strand DNA replication. The primase synthesizes short RNA primers on the lagging strand that the polymerase elongates using dNTPs. Recognizes two trinucleotide sequences 5'-GTT-3' and 5'-GCT-3' in vitro, but uses only the first as the priming site in vivo. This chain is DNA primase (61), found in Escherichia coli (Bacteriophage T4).